The chain runs to 437 residues: GTPase Obg (437 aa).

The 159-residue stretch at 2 to 160 (SMFLDTAKIS…RQLELELKIL (159 aa)) folds into the Obg domain. In terms of domain architecture, OBG-type G spans 161-338 (ADVGLVGFPS…LLEATAELLA (178 aa)). Residues 167–174 (GFPSVGKS), 192–196 (FTTIV), 214–217 (DLPG), 284–287 (NKMD), and 319–321 (SSL) contribute to the GTP site. 2 residues coordinate Mg(2+): Ser174 and Thr194. The 79-residue stretch at 359 to 437 (GFAEAEKDFE…IGKFEFEFVD (79 aa)) folds into the OCT domain.

This sequence belongs to the TRAFAC class OBG-HflX-like GTPase superfamily. OBG GTPase family. Monomer. Requires Mg(2+) as cofactor.

The protein resides in the cytoplasm. In terms of biological role, an essential GTPase which binds GTP, GDP and possibly (p)ppGpp with moderate affinity, with high nucleotide exchange rates and a fairly low GTP hydrolysis rate. Plays a role in control of the cell cycle, stress response, ribosome biogenesis and in those bacteria that undergo differentiation, in morphogenesis control. This Streptococcus pyogenes serotype M18 (strain MGAS8232) protein is GTPase Obg.